Here is a 449-residue protein sequence, read N- to C-terminus: Na(+)/H(+) antiporter NhaA (449 aa).

Transmembrane regions (helical) follow at residues 30–50 (IFLI…WAGA), 69–89 (FGLT…FLVA), 112–132 (LLAA…LNLG), 138–158 (GWGI…GLLG), 168–188 (FLIA…ALFY), 192–212 (LSWI…LMNW), 218–238 (LIWY…SGIH), 241–261 (IAGV…SKIL), 312–332 (SLVD…NAGV), 348–368 (LGIL…FTLI), 386–406 (IIGI…ITNL), and 419–439 (ISIL…LLLT).

The protein belongs to the NhaA Na(+)/H(+) (TC 2.A.33) antiporter family.

It localises to the cell inner membrane. It carries out the reaction Na(+)(in) + 2 H(+)(out) = Na(+)(out) + 2 H(+)(in). Na(+)/H(+) antiporter that extrudes sodium in exchange for external protons. The sequence is that of Na(+)/H(+) antiporter NhaA from Christiangramia forsetii (strain DSM 17595 / CGMCC 1.15422 / KT0803) (Gramella forsetii).